The following is a 473-amino-acid chain: H(+)/Cl(-) exchange transporter ClcA (473 aa).

At 1 to 32 (MKTDTPSLETPQAARLRRRQLIRQLLERDKTP) the chain is on the cytoplasmic side. A helical transmembrane segment spans residues 33 to 69 (LAILFMAAVVGTLVGLAAVAFDKGVAWLQNQRMGALV). Over 70 to 76 (HTADNYP) the chain is Periplasmic. A helical membrane pass occupies residues 77 to 100 (LLLTVAFLCSAVLAMFGYFLVRKY). The short motif at 106–110 (GSGIP) is the Selectivity filter part_1 element. Residue S107 coordinates chloride. Residues 109–116 (IPEIEGAL) constitute an intramembrane region (helical). The Cytoplasmic portion of the chain corresponds to 117–123 (EDQRPVR). A run of 2 helical transmembrane segments spans residues 124 to 141 (WWRV…TLGG) and 148 to 166 (EGPT…LDIF). The Selectivity filter part_2 signature appears at 146-150 (GREGP). Residues 167-176 (RLKGDEARHT) are Cytoplasmic-facing. 2 intramembrane regions (helical) span residues 177–189 (LLAT…LAAA) and 193–201 (PLAGILFII). Residues 202–214 (EEMRPQFRYTLIS) lie on the Cytoplasmic side of the membrane. A helical membrane pass occupies residues 215–232 (IKAVFIGVIMSTIMYRIF). Topologically, residues 233–252 (NHEVALIDVGKLSDAPLNTQ) are periplasmic. A helical transmembrane segment spans residues 253-281 (WLYLILGIIFGIFGPIFNKWVLGMQDLLH). Over 282–287 (RVHGGN) the chain is Cytoplasmic. A helical transmembrane segment spans residues 288-309 (ITKWVLMGGAIGGLCGLLGFVA). Residues 310–329 (PATSGGGFNLIPIATAGNFS) are Periplasmic-facing. A run of 2 helical transmembrane segments spans residues 330–349 (MGML…LCFS) and 355–376 (GIFA…MVVV). The Selectivity filter part_3 signature appears at 355-359 (GIFAP). Chloride is bound by residues I356 and F357. Topologically, residues 377–386 (ELFPQYHLEA) are periplasmic. Positions 387-401 (GTFAIAGMGALLAAS) form an intramembrane region, helical. The note=Loop between two helices intramembrane region spans 402-404 (IRA). An intramembrane region (helical) is located at residues 405-416 (PLTGIILVLEMT). The note=Loop between two helices intramembrane region spans 417–421 (DNYQL). A helical transmembrane segment spans residues 422 to 438 (ILPMIITGLGATLLAQF). Over 439-473 (TGGKPLYSAILARTLAKQEAEQLARSKAASASENT) the chain is Cytoplasmic. Y445 contacts chloride.

This sequence belongs to the chloride channel (TC 2.A.49) family. ClcA subfamily. Homodimer.

The protein localises to the cell inner membrane. It catalyses the reaction 2 chloride(in) + H(+)(out) = 2 chloride(out) + H(+)(in). Functionally, proton-coupled chloride transporter. Functions as antiport system and exchanges two chloride ions for 1 proton. Probably acts as an electrical shunt for an outwardly-directed proton pump that is linked to amino acid decarboxylation, as part of the extreme acid resistance (XAR) response. This is H(+)/Cl(-) exchange transporter ClcA from Shigella boydii serotype 18 (strain CDC 3083-94 / BS512).